We begin with the raw amino-acid sequence, 202 residues long: 3-isopropylmalate dehydratase small subunit 1 (202 aa).

The protein belongs to the LeuD family. LeuD type 1 subfamily. As to quaternary structure, heterodimer of LeuC and LeuD.

The catalysed reaction is (2R,3S)-3-isopropylmalate = (2S)-2-isopropylmalate. Its pathway is amino-acid biosynthesis; L-leucine biosynthesis; L-leucine from 3-methyl-2-oxobutanoate: step 2/4. Catalyzes the isomerization between 2-isopropylmalate and 3-isopropylmalate, via the formation of 2-isopropylmaleate. The chain is 3-isopropylmalate dehydratase small subunit 1 from Mannheimia succiniciproducens (strain KCTC 0769BP / MBEL55E).